The primary structure comprises 177 residues: Adenine phosphoribosyltransferase (177 aa).

Belongs to the purine/pyrimidine phosphoribosyltransferase family. Homodimer.

The protein resides in the cytoplasm. The enzyme catalyses AMP + diphosphate = 5-phospho-alpha-D-ribose 1-diphosphate + adenine. It participates in purine metabolism; AMP biosynthesis via salvage pathway; AMP from adenine: step 1/1. In terms of biological role, catalyzes a salvage reaction resulting in the formation of AMP, that is energically less costly than de novo synthesis. This is Adenine phosphoribosyltransferase from Leptospira borgpetersenii serovar Hardjo-bovis (strain JB197).